The primary structure comprises 130 residues: Capsid protein (130 aa).

The viral RNA-binding stretch occupies residues 31 to 104; sequence EWLSNNSRSQ…FAATDDVTVI (74 aa).

It belongs to the Leviviricetes capsid protein family. As to quaternary structure, homodimer. The capsid proteins form dimers that assemble by group of 5. Twelve such pentamers are linked together with free dimers. The homodimers binds to the viral RNA via an operator hairpin, but also to many other RNA sequences in the viral genome; this interaction probably shifts the virus from the replicative to the assembly phase and ensures specific encapsidation of the viral genome.

It localises to the virion. Its function is as follows. Capsid protein self-assembles to form an icosahedral capsid with a T=3 symmetry, about 26 nm in diameter, and consisting of 89 capsid proteins dimers (178 capsid proteins). Involved in viral genome encapsidation through the interaction between a capsid protein dimer and the multiple packaging signals present in the RNA genome. The capsid also contains 1 copy of the A2 maturation protein. In terms of biological role, acts as a translational repressor of viral replicase synthesis late in infection. This latter function is the result of capsid protein interaction with an RNA hairpin which contains the replicase ribosome-binding site. The polypeptide is Capsid protein (Escherichia coli (Bacteriophage GA)).